The sequence spans 190 residues: Threonylcarbamoyl-AMP synthase (190 aa).

The YrdC-like domain occupies 7–190; it reads GDAIAAAIDV…ALTGELFRQG (184 aa).

The protein belongs to the SUA5 family. TsaC subfamily.

It localises to the cytoplasm. The catalysed reaction is L-threonine + hydrogencarbonate + ATP = L-threonylcarbamoyladenylate + diphosphate + H2O. Required for the formation of a threonylcarbamoyl group on adenosine at position 37 (t(6)A37) in tRNAs that read codons beginning with adenine. Catalyzes the conversion of L-threonine, HCO(3)(-)/CO(2) and ATP to give threonylcarbamoyl-AMP (TC-AMP) as the acyladenylate intermediate, with the release of diphosphate. This Shigella flexneri protein is Threonylcarbamoyl-AMP synthase.